The sequence spans 142 residues: MNKENVITLDNPVKRGEQVIEQVTLMKPSAGTLRGVSLAAVANSEVDALIKVLPRMTAPMLTEQEVAALELPDLVALAGKVVGFLVAELGAVTFPKNLSVDDLMADVAVIFHWPPSELYPMSLTELITWREKALRRSGNTNE.

It belongs to the mulikevirus tail assembly protein family.

In terms of biological role, promotes tail assembly by creating a scaffold for the tail tube proteins. Tail assembly proteins E and E' would wrap the linear tape measure protein to create a tail assembly scaffold. This is Tail assembly protein E' from Enterobacteriaceae (Bacteriophage P2).